A 337-amino-acid chain; its full sequence is Large ribosomal subunit protein uL10 (337 aa).

Positions 309-337 (EEVVEEQEEVKEEEEEESDMASGLGALFG) are disordered. The segment covering 310-327 (EVVEEQEEVKEEEEEESD) has biased composition (acidic residues).

This sequence belongs to the universal ribosomal protein uL10 family. As to quaternary structure, part of the 50S ribosomal subunit. Forms part of the ribosomal stalk which helps the ribosome interact with GTP-bound translation factors. Forms a heptameric L10(L12)2(L12)2(L12)2 complex, where L10 forms an elongated spine to which the L12 dimers bind in a sequential fashion.

Its function is as follows. Forms part of the ribosomal stalk, playing a central role in the interaction of the ribosome with GTP-bound translation factors. The sequence is that of Large ribosomal subunit protein uL10 from Methanococcoides burtonii (strain DSM 6242 / NBRC 107633 / OCM 468 / ACE-M).